The primary structure comprises 80 residues: UPF0057 membrane protein ZK632.10 (80 aa).

2 helical membrane passes run 4 to 24 (ILLAILAIFLPPIAVLLDVGC) and 32 to 52 (ILLTCLGIIPGIIHAWYIILC).

It belongs to the UPF0057 (PMP3) family.

The protein localises to the membrane. In Caenorhabditis elegans, this protein is UPF0057 membrane protein ZK632.10.